A 213-amino-acid polypeptide reads, in one-letter code: Ribosomal RNA small subunit methyltransferase G (213 aa).

S-adenosyl-L-methionine is bound by residues glycine 72, phenylalanine 77, 125-126, and arginine 141; that span reads IE.

This sequence belongs to the methyltransferase superfamily. RNA methyltransferase RsmG family.

It is found in the cytoplasm. It carries out the reaction guanosine(527) in 16S rRNA + S-adenosyl-L-methionine = N(7)-methylguanosine(527) in 16S rRNA + S-adenosyl-L-homocysteine. Specifically methylates the N7 position of guanine in position 527 of 16S rRNA. The sequence is that of Ribosomal RNA small subunit methyltransferase G from Rhizobium meliloti (strain 1021) (Ensifer meliloti).